The following is a 78-amino-acid chain: Large ribosomal subunit protein bL28 (78 aa).

This sequence belongs to the bacterial ribosomal protein bL28 family.

This chain is Large ribosomal subunit protein bL28, found in Methylobacillus flagellatus (strain ATCC 51484 / DSM 6875 / VKM B-1610 / KT).